The chain runs to 229 residues: DNA repair protein RecO (229 aa).

It belongs to the RecO family.

In terms of biological role, involved in DNA repair and RecF pathway recombination. In Legionella pneumophila (strain Paris), this protein is DNA repair protein RecO.